The sequence spans 280 residues: 2-dehydro-3-deoxyphosphooctonate aldolase (280 aa).

This sequence belongs to the KdsA family.

Its subcellular location is the cytoplasm. It catalyses the reaction D-arabinose 5-phosphate + phosphoenolpyruvate + H2O = 3-deoxy-alpha-D-manno-2-octulosonate-8-phosphate + phosphate. The protein operates within carbohydrate biosynthesis; 3-deoxy-D-manno-octulosonate biosynthesis; 3-deoxy-D-manno-octulosonate from D-ribulose 5-phosphate: step 2/3. It participates in bacterial outer membrane biogenesis; lipopolysaccharide biosynthesis. In Coxiella burnetii (strain Dugway 5J108-111), this protein is 2-dehydro-3-deoxyphosphooctonate aldolase.